Here is an 897-residue protein sequence, read N- to C-terminus: 3'-5' exonuclease DinG (897 aa).

Residues 8 to 161 enclose the Exonuclease domain; it reads VVDLETTGNQ…DEDAATTAKL (154 aa). The 256-residue stretch at 241–496 folds into the Helicase ATP-binding domain; it reads SKAVDQLGLT…KAIDQLEKQR (256 aa). Residue 276–283 participates in ATP binding; sequence ASLGSGKS. A DEAH box motif is present at residues 448–451; that stretch reads DEAH. The region spanning 703-893 is the Helicase C-terminal domain; that stretch reads NIDEYVASIV…QFGKLLRQIQ (191 aa).

The protein belongs to the helicase family. DinG subfamily. Type 2 sub-subfamily. Monomer in solution.

Its activity is regulated as follows. The nuclease activity is inhibited by ATP or ADP. Functionally, 3'-5' exonuclease acting on single-stranded DNA (ssDNA) and RNA (ssRNA) substrates. Displays ssDNA-stimulated ATPase activity, but lacks helicase activity. The chain is 3'-5' exonuclease DinG from Staphylococcus aureus (strain MRSA252).